We begin with the raw amino-acid sequence, 893 residues long: Protein kintoun (893 aa).

5 disordered regions span residues Lys-211 to Met-243, Leu-372 to Gly-395, Glu-587 to Asp-719, Gln-781 to Ala-821, and Pro-834 to Met-893. Residues Thr-214 to Glu-232 are compositionally biased toward basic and acidic residues. A Phosphoserine modification is found at Ser-377. Residues Gln-594–Gln-603 are compositionally biased toward acidic residues. Positions His-609–Arg-626 are enriched in basic residues. Residues Gln-640–Gln-651 are compositionally biased toward low complexity. 2 stretches are compositionally biased toward polar residues: residues Glu-656–Ser-667 and Phe-684–Gln-694. Positions Ser-709–Asp-719 are enriched in low complexity. The segment covering Gln-781 to Gln-797 has biased composition (basic residues). Ser-801 is modified (phosphoserine). Residues Asn-836 to Asn-848 are compositionally biased toward low complexity. The segment covering Asn-865–Ala-877 has biased composition (basic and acidic residues). Acidic residues predominate over residues Glu-884–Met-893.

The protein belongs to the PIH1 family. Kintoun subfamily. As to quaternary structure, interacts with Pp1alpha-96A, Pp1-87B, Pp1-13C and flw.

The protein resides in the cytoplasm. Its function is as follows. Required for cytoplasmic pre-assembly of axonemal dyneins, thereby playing a central role in motility in cilia and flagella. Involved in pre-assembly of dynein arm complexes in the cytoplasm before intraflagellar transport loads them for the ciliary compartment. The polypeptide is Protein kintoun (Drosophila grimshawi (Hawaiian fruit fly)).